Consider the following 393-residue polypeptide: Staphopain B (393 aa).

The first 36 residues, M1 to A36, serve as a signal peptide directing secretion. Positions D37 to E219 are excised as a propeptide. Active-site residues include C243, H340, and N360.

This sequence belongs to the peptidase C47 family. In the cytoplasm, prematurely activated/folded SspB forms a stable non-covalent complex with SspC. In terms of processing, proteolytically cleaved by staphylococcal serine protease (SspA).

It is found in the secreted. Its activity is regulated as follows. Prematurely activated/folded staphopain B is inhibited by staphostatin B (SspC), which is probably required to protect staphylococcal cytoplasmic proteins from degradation by SspB. Cysteine protease that plays an important role in the inhibition of host innate immune response. Degrades host elastin, fibrogen, fibronectin and kininogen. Blocks phagocytosis of opsonised S.aureus by neutrophils and monocytes by inducing their death in a proteolytic activity-dependent manner. Decreases surface expression of the 'don't eat me' signal CD31 on neutrophils. Cleaves host galectin-3/LGALS3, thereby inhibiting the neutrophil-activating ability of the lectin. The sequence is that of Staphopain B (sspB) from Staphylococcus aureus.